A 270-amino-acid chain; its full sequence is 3-methyl-2-oxobutanoate hydroxymethyltransferase (270 aa).

Mg(2+)-binding residues include Asp50 and Asp89. 3-methyl-2-oxobutanoate contacts are provided by residues 50–51, Asp89, and Lys118; that span reads DS. Glu120 is a Mg(2+) binding site. The Proton acceptor role is filled by Glu187.

Belongs to the PanB family. Homodecamer; pentamer of dimers. It depends on Mg(2+) as a cofactor.

It is found in the cytoplasm. The catalysed reaction is 3-methyl-2-oxobutanoate + (6R)-5,10-methylene-5,6,7,8-tetrahydrofolate + H2O = 2-dehydropantoate + (6S)-5,6,7,8-tetrahydrofolate. It functions in the pathway cofactor biosynthesis; (R)-pantothenate biosynthesis; (R)-pantoate from 3-methyl-2-oxobutanoate: step 1/2. Catalyzes the reversible reaction in which hydroxymethyl group from 5,10-methylenetetrahydrofolate is transferred onto alpha-ketoisovalerate to form ketopantoate. The sequence is that of 3-methyl-2-oxobutanoate hydroxymethyltransferase from Helicobacter pylori (strain HPAG1).